The sequence spans 470 residues: Argininosuccinate lyase (470 aa).

This sequence belongs to the lyase 1 family. Argininosuccinate lyase subfamily.

Its subcellular location is the cytoplasm. It carries out the reaction 2-(N(omega)-L-arginino)succinate = fumarate + L-arginine. Its pathway is amino-acid biosynthesis; L-arginine biosynthesis; L-arginine from L-ornithine and carbamoyl phosphate: step 3/3. This is Argininosuccinate lyase from Leptospira interrogans serogroup Icterohaemorrhagiae serovar copenhageni (strain Fiocruz L1-130).